The primary structure comprises 352 residues: Protein Wnt-3a (352 aa).

A signal peptide spans 1 to 18 (MAPLGYFLLLCSLKQALG). Cystine bridges form between Cys77–Cys88, Cys128–Cys136, Cys138–Cys155, Cys203–Cys217, Cys205–Cys212, Cys281–Cys312, Cys297–Cys307, Cys311–Cys351, Cys327–Cys342, Cys329–Cys339, and Cys334–Cys335. N-linked (GlcNAc...) asparagine glycosylation occurs at Asn87. A lipid anchor (O-palmitoleoyl serine; by PORCN) is attached at Ser209. The N-linked (GlcNAc...) asparagine glycan is linked to Asn298.

It belongs to the Wnt family. In terms of assembly, forms a soluble 1:1 complex with AFM; this prevents oligomerization and is required for prolonged biological activity. The complex with AFM may represent the physiological form in body fluids. Homooligomer; disulfide-linked, leading to inactivation. Interacts with PORCN. Interacts with APCDD1 and WLS. Component of the Wnt-Fzd-LRP5-LRP6 signaling complex that contains a WNT protein, a FZD protein and LRP5 or LRP6. Interacts directly in the complex with LRP6. Interacts with glypican GPC3. Interacts with PKD1 (via extracellular domain). Interacts with FZD5. Post-translationally, palmitoleoylation by PORCN is required for efficient binding to frizzled receptors. Palmitoleoylation is required for proper trafficking to cell surface, vacuolar acidification is critical to release palmitoleoylated WNT3A from WLS in secretory vesicles. Depalmitoleoylated by NOTUM, leading to inhibit Wnt signaling pathway, possibly by promoting disulfide bond formation and oligomerization. Proteolytic processing by TIKI1 and TIKI2 promotes oxidation and formation of large disulfide-bond oligomers, leading to inactivation of WNT3A. In terms of processing, disulfide bonds have critical and distinct roles in secretion and activity. Loss of each conserved cysteine in WNT3A results in high molecular weight oxidized Wnt oligomers, which are formed through inter-Wnt disulfide bonding. In terms of tissue distribution, moderately expressed in placenta and at low levels in adult lung, spleen, and prostate.

It is found in the secreted. The protein resides in the extracellular space. It localises to the extracellular matrix. Ligand for members of the frizzled family of seven transmembrane receptors. Functions in the canonical Wnt signaling pathway that results in activation of transcription factors of the TCF/LEF family. Required for normal embryonic mesoderm development and formation of caudal somites. Required for normal morphogenesis of the developing neural tube. Mediates self-renewal of the stem cells at the bottom on intestinal crypts (in vitro). This Homo sapiens (Human) protein is Protein Wnt-3a (WNT3A).